We begin with the raw amino-acid sequence, 208 residues long: LysM and putative peptidoglycan-binding domain-containing protein 2 (208 aa).

Residues 1-54 form a disordered region; that stretch reads MAEFSPVLPPLRDDGGGGRYGQPLFPRSRSGSESDSELSQSLARTKTRSYGSTA. The segment covering 27-42 has biased composition (low complexity); it reads RSRSGSESDSELSQSL. A LysM domain is found at 65 to 109; the sequence is IEHRVTDGETLQGIALKYGVTMEQIKRVNKLFSNDCIFLRNTLSI. Disordered stretches follow at residues 122–169 and 187–208; these read LSLE…EELS and AARK…YQEI. Residues 129–140 show a composition bias toward polar residues; that stretch reads SEGNTPQESPCV. Residues 147-156 are compositionally biased toward pro residues; it reads PSPPPEPSVP.

The protein is LysM and putative peptidoglycan-binding domain-containing protein 2 (lysmd2) of Danio rerio (Zebrafish).